The primary structure comprises 698 residues: Methionine--tRNA ligase (698 aa).

The short motif at 18 to 28 (PYANGDLHVGH) is the 'HIGH' region element. Residues Cys149, Cys152, Cys161, and Cys165 each contribute to the Zn(2+) site. Thr350 serves as a coordination point for ATP. The segment at 567 to 590 (EAADAGDEEGEDEDEEPPAADLEP) is disordered. Acidic residues predominate over residues 570-584 (DAGDEEGEDEDEEPP). The region spanning 600-698 (DFQDLDIRVA…EDAEPGTKVQ (99 aa)) is the tRNA-binding domain.

The protein belongs to the class-I aminoacyl-tRNA synthetase family. MetG type 1 subfamily. In terms of assembly, homodimer. Zn(2+) is required as a cofactor.

The protein resides in the cytoplasm. It carries out the reaction tRNA(Met) + L-methionine + ATP = L-methionyl-tRNA(Met) + AMP + diphosphate. Its function is as follows. Is required not only for elongation of protein synthesis but also for the initiation of all mRNA translation through initiator tRNA(fMet) aminoacylation. This Natronomonas pharaonis (strain ATCC 35678 / DSM 2160 / CIP 103997 / JCM 8858 / NBRC 14720 / NCIMB 2260 / Gabara) (Halobacterium pharaonis) protein is Methionine--tRNA ligase.